The primary structure comprises 266 residues: Heat-inducible transcription repressor HrcA (266 aa).

This sequence belongs to the HrcA family.

Negative regulator of class I heat shock genes (grpE-dnaK-dnaJ and groELS operons). Prevents heat-shock induction of these operons. The sequence is that of Heat-inducible transcription repressor HrcA from Helicobacter pylori (strain J99 / ATCC 700824) (Campylobacter pylori J99).